A 326-amino-acid chain; its full sequence is Regulation of nuclear pre-mRNA domain-containing protein 1B (326 aa).

Ser-2 carries the N-acetylserine modification. Positions 2 to 133 (SSFSESALEK…QLKLSMEDSK (132 aa)) constitute a CID domain. Over residues 128-144 (SMEDSKSPPPKAAEEKK) the composition is skewed to basic and acidic residues. A disordered region spans residues 128 to 148 (SMEDSKSPPPKAAEEKKSLKR). Phosphoserine occurs at positions 132 and 134. Tyr-161 carries the phosphotyrosine modification. 2 positions are modified to phosphoserine: Ser-166 and Ser-299.

It belongs to the UPF0400 (RTT103) family. Homodimer. May form a heterodimer with RPRD1A. Associates with RPAP2. Associates with the RNA polymerase II complex. In terms of tissue distribution, widely expressed in the adult with highest levels in liver, colon, prostate and uterus and lowest levels in heart and kidney. Not detected in rectum.

Its subcellular location is the nucleus. Interacts with phosphorylated C-terminal heptapeptide repeat domain (CTD) of the largest RNA polymerase II subunit POLR2A, and participates in dephosphorylation of the CTD by RPAP2. Transcriptional regulator which enhances expression of CCND1. Promotes binding of RNA polymerase II to the CCDN1 promoter and to the termination region before the poly-A site but decreases its binding after the poly-A site. Prevents RNA polymerase II from reading through the 3' end termination site and may allow it to be recruited back to the promoter through promotion of the formation of a chromatin loop. Also enhances the transcription of a number of other cell cycle-related genes including CDK2, CDK4, CDK6 and cyclin-E but not CDKN1A, CDKN1B or cyclin-A. Promotes cell proliferation. The sequence is that of Regulation of nuclear pre-mRNA domain-containing protein 1B (Rprd1b) from Mus musculus (Mouse).